The sequence spans 299 residues: Urease accessory protein UreD (299 aa).

It belongs to the UreD family. UreD, UreF and UreG form a complex that acts as a GTP-hydrolysis-dependent molecular chaperone, activating the urease apoprotein by helping to assemble the nickel containing metallocenter of UreC. The UreE protein probably delivers the nickel.

It localises to the cytoplasm. Its function is as follows. Required for maturation of urease via the functional incorporation of the urease nickel metallocenter. The chain is Urease accessory protein UreD from Haloarcula marismortui (strain ATCC 43049 / DSM 3752 / JCM 8966 / VKM B-1809) (Halobacterium marismortui).